The chain runs to 221 residues: UPF0758 protein KPN78578_39390 (221 aa).

Residues 99-221 (ALVTPSMTRE…YVSFAERGWI (123 aa)) enclose the MPN domain. Zn(2+) contacts are provided by H170, H172, and D183. Residues 170-183 (HNHPSGSPEPSQAD) carry the JAMM motif motif.

The protein belongs to the UPF0758 family. YicR subfamily.

The protein is UPF0758 protein KPN78578_39390 of Klebsiella pneumoniae subsp. pneumoniae (strain ATCC 700721 / MGH 78578).